The following is a 388-amino-acid chain: Cobalt-precorrin-5B C(1)-methyltransferase (388 aa).

The protein belongs to the CbiD family.

The catalysed reaction is Co-precorrin-5B + S-adenosyl-L-methionine = Co-precorrin-6A + S-adenosyl-L-homocysteine. It functions in the pathway cofactor biosynthesis; adenosylcobalamin biosynthesis; cob(II)yrinate a,c-diamide from sirohydrochlorin (anaerobic route): step 6/10. Its function is as follows. Catalyzes the methylation of C-1 in cobalt-precorrin-5B to form cobalt-precorrin-6A. In Rubrobacter xylanophilus (strain DSM 9941 / JCM 11954 / NBRC 16129 / PRD-1), this protein is Cobalt-precorrin-5B C(1)-methyltransferase.